A 255-amino-acid chain; its full sequence is Diphthine synthase (255 aa).

S-adenosyl-L-methionine contacts are provided by residues leucine 9, aspartate 85, valine 88, serine 113–isoleucine 114, leucine 164, alanine 207, and histidine 232.

This sequence belongs to the diphthine synthase family. As to quaternary structure, homodimer.

It carries out the reaction 2-[(3S)-amino-3-carboxypropyl]-L-histidyl-[translation elongation factor 2] + 3 S-adenosyl-L-methionine = diphthine-[translation elongation factor 2] + 3 S-adenosyl-L-homocysteine + 3 H(+). It participates in protein modification; peptidyl-diphthamide biosynthesis. Functionally, S-adenosyl-L-methionine-dependent methyltransferase that catalyzes the trimethylation of the amino group of the modified target histidine residue in translation elongation factor 2 (EF-2), to form an intermediate called diphthine. The three successive methylation reactions represent the second step of diphthamide biosynthesis. The sequence is that of Diphthine synthase from Methanococcus maripaludis (strain DSM 14266 / JCM 13030 / NBRC 101832 / S2 / LL).